An 865-amino-acid polypeptide reads, in one-letter code: Bifunctional uridylyltransferase/uridylyl-removing enzyme (865 aa).

Positions 1–318 (MPHVDLNPLK…FPRPDSDARL (318 aa)) are uridylyltransferase. The uridylyl-removing stretch occupies residues 319 to 675 (IDDDFRNLRE…VRPTEHGEGL (357 aa)). Residues 437-559 (VDQHTLAVVR…VGDERRLAAL (123 aa)) enclose the HD domain. ACT domains follow at residues 676-762 (QVMV…RLPH) and 789-865 (RLSV…QQAA). The disordered stretch occupies residues 747–767 (DPHAARHAHAPRRLPHSHARR). The span at 751–767 (ARHAHAPRRLPHSHARR) shows a compositional bias: basic residues.

The protein belongs to the GlnD family. It depends on Mg(2+) as a cofactor.

It carries out the reaction [protein-PII]-L-tyrosine + UTP = [protein-PII]-uridylyl-L-tyrosine + diphosphate. It catalyses the reaction [protein-PII]-uridylyl-L-tyrosine + H2O = [protein-PII]-L-tyrosine + UMP + H(+). With respect to regulation, uridylyltransferase (UTase) activity is inhibited by glutamine, while glutamine activates uridylyl-removing (UR) activity. In terms of biological role, modifies, by uridylylation and deuridylylation, the PII regulatory proteins (GlnB and homologs), in response to the nitrogen status of the cell that GlnD senses through the glutamine level. Under low glutamine levels, catalyzes the conversion of the PII proteins and UTP to PII-UMP and PPi, while under higher glutamine levels, GlnD hydrolyzes PII-UMP to PII and UMP (deuridylylation). Thus, controls uridylylation state and activity of the PII proteins, and plays an important role in the regulation of nitrogen assimilation and metabolism. In Bordetella parapertussis (strain 12822 / ATCC BAA-587 / NCTC 13253), this protein is Bifunctional uridylyltransferase/uridylyl-removing enzyme.